Here is a 72-residue protein sequence, read N- to C-terminus: Exodeoxyribonuclease 7 small subunit (72 aa).

It belongs to the XseB family. As to quaternary structure, heterooligomer composed of large and small subunits.

The protein resides in the cytoplasm. It carries out the reaction Exonucleolytic cleavage in either 5'- to 3'- or 3'- to 5'-direction to yield nucleoside 5'-phosphates.. Bidirectionally degrades single-stranded DNA into large acid-insoluble oligonucleotides, which are then degraded further into small acid-soluble oligonucleotides. This is Exodeoxyribonuclease 7 small subunit from Ruegeria pomeroyi (strain ATCC 700808 / DSM 15171 / DSS-3) (Silicibacter pomeroyi).